Here is a 164-residue protein sequence, read N- to C-terminus: Putative 4-hydroxy-4-methyl-2-oxoglutarate aldolase (164 aa).

Residues 75–78 (GDML) and Arg-97 each bind substrate. Asp-98 contributes to the a divalent metal cation binding site.

It belongs to the class II aldolase/RraA-like family. In terms of assembly, homotrimer. Requires a divalent metal cation as cofactor.

The catalysed reaction is 4-hydroxy-4-methyl-2-oxoglutarate = 2 pyruvate. It carries out the reaction oxaloacetate + H(+) = pyruvate + CO2. In terms of biological role, catalyzes the aldol cleavage of 4-hydroxy-4-methyl-2-oxoglutarate (HMG) into 2 molecules of pyruvate. Also contains a secondary oxaloacetate (OAA) decarboxylase activity due to the common pyruvate enolate transition state formed following C-C bond cleavage in the retro-aldol and decarboxylation reactions. This is Putative 4-hydroxy-4-methyl-2-oxoglutarate aldolase from Hahella chejuensis (strain KCTC 2396).